The following is a 145-amino-acid chain: Hemoglobin subunit beta-A (145 aa).

Positions 1–145 (MLTAEEKAAV…VANALAHRYH (145 aa)) constitute a Globin domain. Heme b-binding residues include H62 and H91.

The protein belongs to the globin family. As to quaternary structure, heterotetramer of two alpha chains and two beta chains. As to expression, red blood cells.

Its function is as follows. Involved in oxygen transport from the lung to the various peripheral tissues. The sequence is that of Hemoglobin subunit beta-A from Bos javanicus (Wild banteng).